The chain runs to 259 residues: Tubulin-specific chaperone C (259 aa).

A C-CAP/cofactor C-like domain is found at 112–241 (PEVYFENDTL…DEHPILDFTW (130 aa)).

This sequence belongs to the TBCC family.

Its subcellular location is the cytoplasm. It is found in the cytoskeleton. Functionally, tubulin-folding protein; involved in the final step of the tubulin folding pathway. In Schizosaccharomyces pombe (strain 972 / ATCC 24843) (Fission yeast), this protein is Tubulin-specific chaperone C (cin2).